We begin with the raw amino-acid sequence, 286 residues long: Alpha-ketoglutarate-dependent dioxygenase alkB homolog 3 (286 aa).

Positions 1–38 are disordered; it reads MEDKRRRARVQGAWAGPAKSQATAQPAPTAENNLQQRP. Positions 20-36 are enriched in polar residues; it reads SQATAQPAPTAENNLQQ. Residues Trp115 and 141 to 143 contribute to the substrate site; that span reads YTY. The Fe2OG dioxygenase domain maps to 172-278; it reads SFNSLLCNLY…RINLTFRTVY (107 aa). Leu177 is modified ((4R)-5-hydroxyleucine; alternate). At Leu177 the chain carries (4R)-5-oxoleucine; alternate. Residue 179 to 181 coordinates 2-oxoglutarate; the sequence is NLY. His191 and Asp193 together coordinate Fe cation. Substrate is bound at residue Asp194. His257 is a binding site for Fe cation. 2-oxoglutarate is bound by residues 269-275 and Arg275; that span reads RINLTFR.

It belongs to the alkB family. In terms of assembly, interacts with the ASCC complex composed of ASCC1, ASCC2 and ASCC3. Interacts directly with ASCC3, and is thereby recruited to the ASCC complex. Interacts with OTUD4; the interaction is direct. Interacts with USP7 and USP9X. Fe(2+) is required as a cofactor. Post-translationally, ubiquitinated; undergoes 'Lys-48'-linked polyubiquitination. OTUD4 promotes USP7 and USP9X-dependent deubiquitination of 'Lys-48'-polyubiquitinated ALKBH3 promoting the repair of alkylated DNA lesions.

It is found in the nucleus. The protein resides in the cytoplasm. The enzyme catalyses an N(1)-methyladenosine in mRNA + 2-oxoglutarate + O2 = an adenosine in mRNA + formaldehyde + succinate + CO2. It carries out the reaction a methylated nucleobase within DNA + 2-oxoglutarate + O2 = a nucleobase within DNA + formaldehyde + succinate + CO2. It catalyses the reaction an N(1)-methyl-2'-deoxyadenosine in single-stranded DNA + 2-oxoglutarate + O2 = a 2'-deoxyadenosine in single-stranded DNA + formaldehyde + succinate + CO2 + H(+). The catalysed reaction is an N(3)-methyl-2'-deoxycytidine in single-stranded DNA + 2-oxoglutarate + O2 = a 2'-deoxycytidine in single-stranded DNA + formaldehyde + succinate + CO2 + H(+). The enzyme catalyses a 3,N(4)-etheno-2'-deoxycytidine in single-stranded DNA + 2-oxoglutarate + O2 + H2O = a 2'-deoxycytidine in single-stranded DNA + glyoxal + succinate + CO2. With respect to regulation, activated by ascorbate. Its function is as follows. Dioxygenase that mediates demethylation of DNA and RNA containing 1-methyladenosine (m1A). Repairs alkylated DNA containing 1-methyladenosine (m1A) and 3-methylcytosine (m3C) by oxidative demethylation. Has a strong preference for single-stranded DNA. Able to process alkylated m3C within double-stranded regions via its interaction with ASCC3, which promotes DNA unwinding to generate single-stranded substrate needed for ALKBH3. Can repair exocyclic 3,N4-ethenocytosine adducs in single-stranded DNA. Also acts on RNA. Demethylates N(1)-methyladenosine (m1A) RNA, an epigenetic internal modification of messenger RNAs (mRNAs) highly enriched within 5'-untranslated regions (UTRs) and in the vicinity of start codons. Requires molecular oxygen, alpha-ketoglutarate and iron. This Bos taurus (Bovine) protein is Alpha-ketoglutarate-dependent dioxygenase alkB homolog 3.